A 358-amino-acid polypeptide reads, in one-letter code: MLLLKEEDEGRRRTSVPTQLMKLNRSQWWILVFISIFFLISAQAISVLLGRFYYNEGGNSKWISTLVQTGGFPILYLPLSLLPASQSSSSSSSSSSFKTLVWIYLSLGFAIGLDNFLYSVGLLYLSASTYSILCASQLAFNGVFYYYINSQKITCLIFFSVLFLSISAVLVSLDDDSNSPSGDSKWSYLIGCFCAVFASLIYSLQLSLMQFSFEKVLKSETLSMVLEMQIYTSLVASCVAVIGLFASGEWMLLSVEMEEFQEGQVIYVLTLVGAAVSCQLGCVGAVSLIFLVSSLFSNLISTLSLIVTPLAAIAVFHDKLTEVKMVAMPIAFTGFTFYIYQNYLDDLKVQRAREAQAE.

The next 10 membrane-spanning stretches (helical) occupy residues 29–49, 62–82, 100–120, 128–148, 153–173, 189–209, 235–255, 280–299, 300–316, and 320–340; these read WILVFISIFFLISAQAISVLL, WISTLVQTGGFPILYLPLSLL, LVWIYLSLGFAIGLDNFLYSV, STYSILCASQLAFNGVFYYYI, ITCLIFFSVLFLSISAVLVSL, LIGCFCAVFASLIYSLQLSLM, VASCVAVIGLFASGEWMLLSV, LGCVGAVSLIFLVSSLFSNL, ISTLSLIVTPLAAIAVF, and LTEVKMVAMPIAFTGFTFYIY.

It belongs to the purine permeases (TC 2.A.7.14) family.

The protein localises to the membrane. The polypeptide is Putative purine permease 12 (PUP12) (Arabidopsis thaliana (Mouse-ear cress)).